Consider the following 874-residue polypeptide: Adhesion G-protein coupled receptor D1 (874 aa).

The signal sequence occupies residues 1 to 25; that stretch reads MEKLLRLCCWYSWLLLFYYNFQVRG. Over 26–567 the chain is Extracellular; it reads VYSRSQDHPG…LARGHQVALS (542 aa). The Pentraxin (PTX) domain maps to 79–276; sequence KGVTLLYYGR…ASPVMPTDAY (198 aa). N90, N185, N282, N302, N319, N394, N476, N501, and N533 each carry an N-linked (GlcNAc...) asparagine glycan. Residues 371-557 form the GAIN-B domain; the sequence is QVTVEGSSAM…AILMQVVPLE (187 aa). 2 cysteine pairs are disulfide-bonded: C510-C539 and C527-C541. The tract at residues 510-557 is GPS; it reads CAFLDFSSGEGVWSNHGCALTRGNLTYSVCRCTHLTNFAILMQVVPLE. Residues 546-554 are stachel; that stretch reads NFAILMQVV. Q563 lines the 17beta-hydroxy-5alpha-androstan-3-one pocket. Residues 568–590 traverse the membrane as a helical segment; sequence SISYVGCSLSVLCLVATLVTFAV. The Cytoplasmic portion of the chain corresponds to 591-601; that stretch reads LSSVSTIRNQR. The chain crosses the membrane as a helical span at residues 602–623; it reads YHIHANLSFAVLVAQVLLLISF. The Extracellular segment spans residues 624–632; sequence RLEPGTTPC. The cysteines at positions 632 and 704 are disulfide-linked. Residues 633–655 form a helical membrane-spanning segment; sequence QVMAVLLHYFFLSAFAWMLVEGL. Topologically, residues 656–673 are cytoplasmic; the sequence is HLYSMVIKVFGSEDSKHR. Residues 674–695 form a helical membrane-spanning segment; sequence YYYGMGWGFPLLICIISLSFAM. At 696–710 the chain is on the extracellular side; it reads DSYGTSNNCWLSLAS. A helical transmembrane segment spans residues 711 to 732; sequence GAIWAFVAPALFVIVVNIGILI. Over 733-757 the chain is Cytoplasmic; that stretch reads AVTRVISQISADNYKIHGDPSAFKL. The chain crosses the membrane as a helical span at residues 758–780; sequence TAKAVAVLLPILGTSWVFGVLAV. Topologically, residues 781–783 are extracellular; it reads NGC. A helical membrane pass occupies residues 784–810; it reads AVVFQYMFATLNSLQGLFIFLFHCLLN. Residue N795 coordinates 17beta-hydroxy-5alpha-androstan-3-one. Residues 811–874 lie on the Cytoplasmic side of the membrane; the sequence is SEVRAAFKHK…SAHRVDLSAV (64 aa). The tract at residues 854-874 is disordered; the sequence is TKLSPWDKSSHSAHRVDLSAV. Residues 861 to 874 are compositionally biased toward basic and acidic residues; that stretch reads KSSHSAHRVDLSAV.

This sequence belongs to the G-protein coupled receptor 2 family. Adhesion G-protein coupled receptor (ADGR) subfamily. As to quaternary structure, heterodimer of 2 chains generated by proteolytic processing; the large extracellular N-terminal fragment and the membrane-bound C-terminal fragment predominantly remain associated and non-covalently linked. Interacts with ESYT1; interaction takes place in absence of cytosolic calcium and inhibits the G protein-coupled receptor activity of ADGRD1. Autoproteolytically processed at the GPS region of the GAIN-B domain; this cleavage modulates receptor activity. Cleavage takes place early in the secretory pathway before N-glycosylation. In terms of tissue distribution, up-regulated in CD133(+) cell population of glioblastoma.

The protein localises to the cell membrane. Its activity is regulated as follows. Forms a heterodimer of 2 chains generated by proteolytic processing that remain associated through non-covalent interactions mediated by the GAIN-B domain. In the inactivated receptor, the Stachel sequence (also named stalk) is embedded in the GAIN-B domain, where it adopts a beta-strand conformation. On activation, the Stachel moves into the 7 transmembrane region and adopts a twisted hook-shaped configuration that forms contacts within the receptor, leading to coupling of a G-alpha protein, which activates signaling. The cleaved GAIN-B and N-terminal domains can then dissociate from the rest of the receptor. Interaction with ESYT1 in absence of cytosolic calcium inhibits the G protein-coupled receptor activity; interaction and inhibition is relieved when cytosolic calcium increases. Activated by AP503, a small molecule that activates ADGRD1 without activating androgen nuclear receptors: AP503 enhances muscle strength without eliciting androgenic adverse effects. Activated by the 8E3E8 antibody that targets the N-terminus. Functionally, adhesion G-protein coupled receptor (aGPCR) for androgen hormone 5alpha-dihydrotestosterone (5alpha-DHT), also named 17beta-hydroxy-5alpha-androstan-3-one, the most potent hormone among androgens. Also activated by methenolone drug. Ligand binding causes a conformation change that triggers signaling via guanine nucleotide-binding proteins (G proteins) and modulates the activity of downstream effectors, such as adenylate cyclase. ADGRD1 is coupled to G(s) G proteins and mediates activation of adenylate cyclase activity. Acts as a 5alpha-DHT receptor in muscle cells, thereby increasing intracellular cyclic AMP (cAMP) levels and enhancing muscle strength. This is Adhesion G-protein coupled receptor D1 from Homo sapiens (Human).